The following is a 183-amino-acid chain: Transmembrane protein 154 (183 aa).

Positions 1-22 are cleaved as a signal peptide; it reads MQAPRAALVFALVIALVPVGRG. Residues 23 to 75 are Extracellular-facing; that stretch reads NYEELENSGDTTVESERPNKVTIPSTFAAVTIKETLNANINSTNFAPDENQLE. The chain crosses the membrane as a helical span at residues 76–96; that stretch reads FILMVLIPLILLVLLLLSVVF. The Cytoplasmic portion of the chain corresponds to 97–183; it reads LATYYKRKRT…SNHNPSDSES (87 aa). Residues 163 to 183 form a disordered region; sequence ECLPTLKEEKESNHNPSDSES. S179 carries the phosphoserine modification.

It is found in the membrane. The protein is Transmembrane protein 154 (TMEM154) of Homo sapiens (Human).